A 960-amino-acid chain; its full sequence is ATPase 4, plasma membrane-type (960 aa).

Topologically, residues 1 to 69 (MTTTVEDNRE…EKKESKFLKF (69 aa)) are cytoplasmic. The chain crosses the membrane as a helical span at residues 70-89 (LGFMWNPLSWVMEAAAIMAI). The Extracellular portion of the chain corresponds to 90-101 (ALANGGGKPPDW). Residues 102 to 122 (QDFVGIITLLVINSTISFIEE) form a helical membrane-spanning segment. Residues 123 to 251 (NNAGNAAAAL…GHFQQVLTAI (129 aa)) are Cytoplasmic-facing. A helical transmembrane segment spans residues 252 to 272 (GNFCICSIAVGMLIEIVVMYP). Residues 273–281 (IQHRAYRPG) are Extracellular-facing. A helical transmembrane segment spans residues 282 to 299 (IDNLLVLLIGGIPIAMPT). At 300 to 651 (VLSVTMAIGS…TSRAIFQRMK (352 aa)) the chain is on the cytoplasmic side. D337 acts as the 4-aspartylphosphate intermediate in catalysis. 2 residues coordinate Mg(2+): D596 and D600. The chain crosses the membrane as a helical span at residues 652-673 (NYTIYAVSITIRIVLGFMLLAL). At 674–678 (IWQFD) the chain is on the extracellular side. A helical transmembrane segment spans residues 679–701 (FPPFMVLIIAILNDGTIMTISKD). Residues 702–717 (RVKPSPLPDSWKLSEI) lie on the Cytoplasmic side of the membrane. The helical transmembrane segment at 718–738 (FATGVVFGSYMAMMTVIFFWV) threads the bilayer. Residues 739–763 (SYKTDFFPRTFGVATLEKTAHDDFR) are Extracellular-facing. The chain crosses the membrane as a helical span at residues 764–784 (KLASAIYLQVSIISQALIFVT). At 785–796 (RSRSWSFVERPG) the chain is on the cytoplasmic side. Residues 797 to 817 (IFLMIAFILAQLVATLIAVYA) traverse the membrane as a helical segment. The Extracellular portion of the chain corresponds to 818–825 (NWSFAAIE). A helical membrane pass occupies residues 826–846 (GIGWGWAGVIWLYNIIFYIPL). Topologically, residues 847–960 (DFIKFFIRYA…IETIQQAYTV (114 aa)) are cytoplasmic. T893 is subject to Phosphothreonine. S942 is modified (phosphoserine). An interaction with 14-3-3 proteins region spans residues 958 to 960 (YTV). T959 is modified (phosphothreonine).

This sequence belongs to the cation transport ATPase (P-type) (TC 3.A.3) family. Type IIIA subfamily. Binds to 14-3-3 proteins. The binding is induced by phosphorylation of Thr-959. Binding to 14-3-3 proteins activates the H(+)-ATPase. As to expression, expressed in guard cells and roots.

It localises to the cell membrane. The enzyme catalyses ATP + H2O + H(+)(in) = ADP + phosphate + 2 H(+)(out). In terms of biological role, the plasma membrane H(+) ATPase of plants and fungi generates a proton gradient that drives the active transport of nutrients by H(+)-symport. The resulting external acidification and/or internal alkinization may mediate growth responses. In Arabidopsis thaliana (Mouse-ear cress), this protein is ATPase 4, plasma membrane-type (AHA4).